Here is a 500-residue protein sequence, read N- to C-terminus: Raftlin-2 (500 aa).

A lipid anchor (N-myristoyl glycine) is attached at Gly-2. Residue Cys-3 is the site of S-palmitoyl cysteine attachment. Residues 203–236 (GHLSESGVEEEPQHESGQHQTERNSSPSYANPKR) form a disordered region. The span at 213–224 (EPQHESGQHQTE) shows a compositional bias: basic and acidic residues. Ser-404 is modified (phosphoserine). A disordered region spans residues 406–500 (AQTPERKGSR…EEGVTQVTCM (95 aa)). A Phosphothreonine modification is found at Thr-408. Positions 409–424 (PERKGSRLLKGEDRNK) are enriched in basic and acidic residues. Residues 426-438 (SSRSLGLDTNASQ) are compositionally biased toward polar residues. Ser-429 carries the post-translational modification Phosphoserine. Residues 467–478 (SDSFSGFSSSDS) show a composition bias toward low complexity.

Belongs to the raftlin family. In terms of tissue distribution, expressed in B-cells, heart, brain, spleen, large intestine and lung. Expressed in dendritic cells and macrophages.

The protein resides in the cell membrane. In terms of biological role, upon bacterial lipopolysaccharide stimulation, mediates clathrin-dependent internalization of TLR4 in dendritic cells, resulting in activation of TICAM1-mediated signaling and subsequent IFNB1 production. May regulate B-cell antigen receptor-mediated signaling. This is Raftlin-2 (Rftn2) from Mus musculus (Mouse).